Here is a 139-residue protein sequence, read N- to C-terminus: MRVKGGTVSRARRKKFVKLAKGYRGQRRINYKVAKQQVYKSYLYAYRDRKNTKRNFRKLWIARINAAARMNGLSYSKLMHGLTLAGVELNRKMLAEIAVSDFDTFTKLADQAKAALSSDNVLVQARTAATTDTTVSVER.

Belongs to the bacterial ribosomal protein bL20 family.

Its function is as follows. Binds directly to 23S ribosomal RNA and is necessary for the in vitro assembly process of the 50S ribosomal subunit. It is not involved in the protein synthesizing functions of that subunit. The sequence is that of Large ribosomal subunit protein bL20 from Leuconostoc mesenteroides subsp. mesenteroides (strain ATCC 8293 / DSM 20343 / BCRC 11652 / CCM 1803 / JCM 6124 / NCDO 523 / NBRC 100496 / NCIMB 8023 / NCTC 12954 / NRRL B-1118 / 37Y).